Here is a 325-residue protein sequence, read N- to C-terminus: D-alanine--D-alanine ligase (325 aa).

One can recognise an ATP-grasp domain in the interval 107–311 (KRLLLSESLP…YEALCVEVLK (205 aa)). 137–192 (VDTLGLPLIVKPAREGSSLGLSKVTERAAMAAAVALAEKMDADILCEQFISGDEVT) provides a ligand contact to ATP. Residues Asp-264, Glu-278, and Asn-280 each contribute to the Mg(2+) site.

It belongs to the D-alanine--D-alanine ligase family. Requires Mg(2+) as cofactor. Mn(2+) is required as a cofactor.

The protein resides in the cytoplasm. The catalysed reaction is 2 D-alanine + ATP = D-alanyl-D-alanine + ADP + phosphate + H(+). Its pathway is cell wall biogenesis; peptidoglycan biosynthesis. Cell wall formation. The sequence is that of D-alanine--D-alanine ligase from Polaromonas naphthalenivorans (strain CJ2).